Consider the following 920-residue polypeptide: Isoleucine--tRNA ligase (920 aa).

Residues 58-68 (PYANGHLHLGH) carry the 'HIGH' region motif. Position 569 (Glu-569) interacts with L-isoleucyl-5'-AMP. Positions 610–614 (KMSKS) match the 'KMSKS' region motif. Residue Lys-613 participates in ATP binding. Zn(2+)-binding residues include Cys-895, Cys-898, Cys-910, and Cys-913.

It belongs to the class-I aminoacyl-tRNA synthetase family. IleS type 1 subfamily. In terms of assembly, monomer. The cofactor is Zn(2+).

It is found in the cytoplasm. It carries out the reaction tRNA(Ile) + L-isoleucine + ATP = L-isoleucyl-tRNA(Ile) + AMP + diphosphate. Its function is as follows. Catalyzes the attachment of isoleucine to tRNA(Ile). As IleRS can inadvertently accommodate and process structurally similar amino acids such as valine, to avoid such errors it has two additional distinct tRNA(Ile)-dependent editing activities. One activity is designated as 'pretransfer' editing and involves the hydrolysis of activated Val-AMP. The other activity is designated 'posttransfer' editing and involves deacylation of mischarged Val-tRNA(Ile). This chain is Isoleucine--tRNA ligase, found in Helicobacter pylori (strain J99 / ATCC 700824) (Campylobacter pylori J99).